The sequence spans 115 residues: Large ribosomal subunit protein bL19 (115 aa).

This sequence belongs to the bacterial ribosomal protein bL19 family.

Functionally, this protein is located at the 30S-50S ribosomal subunit interface and may play a role in the structure and function of the aminoacyl-tRNA binding site. The chain is Large ribosomal subunit protein bL19 from Streptococcus suis (strain 98HAH33).